The sequence spans 421 residues: Eukaryotic translation initiation factor 3 subunit E (421 aa).

Positions Phe215–Val394 constitute a PCI domain.

Belongs to the eIF-3 subunit E family. Component of the eukaryotic translation initiation factor 3 (eIF-3) complex.

Its subcellular location is the cytoplasm. Functionally, component of the eukaryotic translation initiation factor 3 (eIF-3) complex, which is involved in protein synthesis of a specialized repertoire of mRNAs and, together with other initiation factors, stimulates binding of mRNA and methionyl-tRNAi to the 40S ribosome. The eIF-3 complex specifically targets and initiates translation of a subset of mRNAs involved in cell proliferation. In Yarrowia lipolytica (strain CLIB 122 / E 150) (Yeast), this protein is Eukaryotic translation initiation factor 3 subunit E.